Consider the following 69-residue polypeptide: Sec-independent protein translocase protein TatA (69 aa).

The helical transmembrane segment at Met-1–Gly-21 threads the bilayer. The span at Glu-47 to Ala-63 shows a compositional bias: basic and acidic residues. The interval Glu-47–Ser-69 is disordered.

The protein belongs to the TatA/E family. As to quaternary structure, forms a complex with TatC.

It is found in the cell inner membrane. Part of the twin-arginine translocation (Tat) system that transports large folded proteins containing a characteristic twin-arginine motif in their signal peptide across membranes. TatA could form the protein-conducting channel of the Tat system. This Chlorobium chlorochromatii (strain CaD3) protein is Sec-independent protein translocase protein TatA.